Reading from the N-terminus, the 332-residue chain is Biotin synthase (332 aa).

Residues 52–282 enclose the Radical SAM core domain; the sequence is FPENEVEFCS…KAELRLCGGR (231 aa). 3 residues coordinate [4Fe-4S] cluster: Cys-70, Cys-74, and Cys-77. Residues Cys-114, Cys-147, Cys-207, and Arg-277 each contribute to the [2Fe-2S] cluster site.

It belongs to the radical SAM superfamily. Biotin synthase family. As to quaternary structure, homodimer. [4Fe-4S] cluster is required as a cofactor. It depends on [2Fe-2S] cluster as a cofactor.

The enzyme catalyses (4R,5S)-dethiobiotin + (sulfur carrier)-SH + 2 reduced [2Fe-2S]-[ferredoxin] + 2 S-adenosyl-L-methionine = (sulfur carrier)-H + biotin + 2 5'-deoxyadenosine + 2 L-methionine + 2 oxidized [2Fe-2S]-[ferredoxin]. It functions in the pathway cofactor biosynthesis; biotin biosynthesis; biotin from 7,8-diaminononanoate: step 2/2. Functionally, catalyzes the conversion of dethiobiotin (DTB) to biotin by the insertion of a sulfur atom into dethiobiotin via a radical-based mechanism. The sequence is that of Biotin synthase from Aquifex aeolicus (strain VF5).